Here is a 437-residue protein sequence, read N- to C-terminus: Sodium/bile acid cotransporter 4 (437 aa).

Topologically, residues 1–103 (MDSLDNTTLL…PPFWDTPLNH (103 aa)) are extracellular. N-linked (GlcNAc...) asparagine glycans are attached at residues Asn6 and Asn20. Residues 15–79 (SLLPDNLTLS…SSSLTVGVAG (65 aa)) are disordered. The segment covering 22 to 41 (TLSPNAGSPSASTLSPLAVT) has biased composition (polar residues). The segment covering 42–74 (SSPGPGLSLAPSPSIGFSPEATPTPEPTSSSLT) has biased composition (low complexity). Residues 104-124 (GLNVFVGAALCITMLGLGCTV) form a helical membrane-spanning segment. Topologically, residues 125 to 140 (DVNHFGAHVRRPVGAL) are cytoplasmic. Residues 141–161 (LAALCQFGFLPLLAFLLALIF) form a helical membrane-spanning segment. Residues 162-197 (KLDEVAAVAVLLCGCCPGGNLSNLMSLLVDGDMNLS) are Extracellular-facing. N-linked (GlcNAc...) asparagine glycosylation is found at Asn181 and Asn195. Residues 198–218 (IIMTISSTLLALVLMPLCLWI) traverse the membrane as a helical segment. The Cytoplasmic segment spans residues 219–233 (YSRAWINTPLVQLLP). A helical membrane pass occupies residues 234–254 (LGAVTLTLCSTLIPIGLGVFI). The Extracellular segment spans residues 255–267 (RYKYNRVADYIVK). A helical transmembrane segment spans residues 268–288 (VSLWSLLVTLVVLFIMTGTML). Over 289–291 (GPE) the chain is Cytoplasmic. A helical transmembrane segment spans residues 292-312 (LLASIPATVYVVAIFMPLAGY). At 313–360 (ASGYGLATLFHLPPNCKRTVCLETGSQNVQLCTAILKLAFPPRFIGSM) the chain is on the extracellular side. A helical membrane pass occupies residues 361–381 (YMFPLLYALFQSAEAGVFVLI). At 382-437 (YKMYGSEILHKREALDEDEDTDISYKKLKEEEMADTSYGTVGTDDLVMMETTQTAL) the chain is on the cytoplasmic side.

The protein belongs to the bile acid:sodium symporter (BASS) (TC 2.A.28) family. In terms of processing, activated following N-terminal proteolytic cleavage by thrombin and/or proteases. In terms of tissue distribution, highest expression in the brain and significantly above background levels in the eye, prostate, and whole embryo tissue preparations.

It localises to the cell membrane. Its function is as follows. Transporter for bile acids. The sequence is that of Sodium/bile acid cotransporter 4 (Slc10a4) from Mus musculus (Mouse).